The primary structure comprises 117 residues: Putative membrane protein insertion efficiency factor (117 aa).

It belongs to the UPF0161 family.

It localises to the cell inner membrane. Its function is as follows. Could be involved in insertion of integral membrane proteins into the membrane. The protein is Putative membrane protein insertion efficiency factor of Helicobacter pylori (strain ATCC 700392 / 26695) (Campylobacter pylori).